The sequence spans 188 residues: Elongation factor P (188 aa).

The residue at position 34 (Lys-34) is an N6-(3,6-diaminohexanoyl)-5-hydroxylysine.

This sequence belongs to the elongation factor P family. In terms of processing, may be beta-lysylated on the epsilon-amino group of Lys-34 by the combined action of EpmA and EpmB, and then hydroxylated on the C5 position of the same residue by EpmC (if this protein is present). Lysylation is critical for the stimulatory effect of EF-P on peptide-bond formation. The lysylation moiety may extend toward the peptidyltransferase center and stabilize the terminal 3-CCA end of the tRNA. Hydroxylation of the C5 position on Lys-34 may allow additional potential stabilizing hydrogen-bond interactions with the P-tRNA.

The protein resides in the cytoplasm. Its pathway is protein biosynthesis; polypeptide chain elongation. Functionally, involved in peptide bond synthesis. Alleviates ribosome stalling that occurs when 3 or more consecutive Pro residues or the sequence PPG is present in a protein, possibly by augmenting the peptidyl transferase activity of the ribosome. Modification of Lys-34 is required for alleviation. In Haemophilus influenzae (strain 86-028NP), this protein is Elongation factor P.